Here is a 147-residue protein sequence, read N- to C-terminus: Spermidine export protein MdtJ (147 aa).

The next 4 membrane-spanning stretches (helical) occupy residues 1–21 (MIYW…TLSM), 31–51 (TGHI…SLAV), 54–74 (VALG…ITIF), and 81–101 (ETLS…ILLV). Residues 105 to 147 (TRKPKQPNCHRGNRPPSVQELKTQTTGHHKGVAVESGEHHAAA) form a disordered region.

The protein belongs to the drug/metabolite transporter (DMT) superfamily. Small multidrug resistance (SMR) (TC 2.A.7.1) family. MdtJ subfamily. Forms a complex with MdtI.

It is found in the cell inner membrane. In terms of biological role, catalyzes the excretion of spermidine. The sequence is that of Spermidine export protein MdtJ from Yersinia pestis bv. Antiqua (strain Antiqua).